Here is a 119-residue protein sequence, read N- to C-terminus: Ribonuclease P protein component (119 aa).

Belongs to the RnpA family. In terms of assembly, consists of a catalytic RNA component (M1 or rnpB) and a protein subunit.

It catalyses the reaction Endonucleolytic cleavage of RNA, removing 5'-extranucleotides from tRNA precursor.. RNaseP catalyzes the removal of the 5'-leader sequence from pre-tRNA to produce the mature 5'-terminus. It can also cleave other RNA substrates such as 4.5S RNA. The protein component plays an auxiliary but essential role in vivo by binding to the 5'-leader sequence and broadening the substrate specificity of the ribozyme. The chain is Ribonuclease P protein component from Sodalis glossinidius (strain morsitans).